Consider the following 98-residue polypeptide: MNQTAILICCLIFLTLSGIQGVPLSRTVRCTCISISNQPVNPRSLEKLEIIPASQFCPRVEIIATMKKKGEKRCLNPESKAIKNLLKAVSKERSKRSP.

Residues 1-21 form the signal peptide; it reads MNQTAILICCLIFLTLSGIQG. Arg-26 is modified (citrulline; by PAD2). Cystine bridges form between Cys-30/Cys-57 and Cys-32/Cys-74.

The protein belongs to the intercrine alpha (chemokine CxC) family. Monomer, dimer, and tetramer. Interacts with CXCR3 (via N-terminus). Several proteases can mediate post-secretion cleavages. DPP4 cleaves CXCL10 on its N-terminal 2 amino acids leading to an antagonist form of CXCL10. This dominant negative form is capable of binding CXCR3 but does not induce signaling. MMP9 cleaves 9 amino acids instead. Mainly secreted by monocytes, endothelial cells as well as fibroblasts. Expressed by epithelial cells in thymus. Microglial cells produce CXCL10 in response to viral stimulation.

The protein localises to the secreted. In terms of biological role, pro-inflammatory cytokine that is involved in a wide variety of processes such as chemotaxis, differentiation, and activation of peripheral immune cells, regulation of cell growth, apoptosis and modulation of angiostatic effects. Plays thereby an important role during viral infections by stimulating the activation and migration of immune cells to the infected sites. Mechanistically, binding of CXCL10 to the CXCR3 receptor activates G protein-mediated signaling and results in downstream activation of phospholipase C-dependent pathway, an increase in intracellular calcium production and actin reorganization. In turn, recruitment of activated Th1 lymphocytes occurs at sites of inflammation. Activation of the CXCL10/CXCR3 axis also plays an important role in neurons in response to brain injury for activating microglia, the resident macrophage population of the central nervous system, and directing them to the lesion site. This recruitment is an essential element for neuronal reorganization. The sequence is that of C-X-C motif chemokine 10 (CXCL10) from Homo sapiens (Human).